The chain runs to 49 residues: Large ribosomal subunit protein bL33A (49 aa).

Belongs to the bacterial ribosomal protein bL33 family.

This Lactobacillus johnsonii (strain CNCM I-12250 / La1 / NCC 533) protein is Large ribosomal subunit protein bL33A.